The following is a 124-amino-acid chain: Fluoride-specific ion channel FluC (124 aa).

Transmembrane regions (helical) follow at residues 4 to 24 (VLYIAAGGAIGAVLRYSISIL), 35 to 55 (FGTLIVNVAGSFLMGCIYALA), 60 to 80 (IGPEWKALIGVGLLGALTTFS), and 100 to 120 (LNVLLNLILCLTVVYLGQQLI). Gly-74 and Thr-77 together coordinate Na(+).

This sequence belongs to the fluoride channel Fluc/FEX (TC 1.A.43) family.

It is found in the cell inner membrane. The catalysed reaction is fluoride(in) = fluoride(out). With respect to regulation, na(+) is not transported, but it plays an essential structural role and its presence is essential for fluoride channel function. Fluoride-specific ion channel. Important for reducing fluoride concentration in the cell, thus reducing its toxicity. This chain is Fluoride-specific ion channel FluC, found in Shewanella amazonensis (strain ATCC BAA-1098 / SB2B).